The chain runs to 583 residues: Protein FMP25, mitochondrial (583 aa).

The N-terminal 25 residues, 1 to 25, are a transit peptide targeting the mitochondrion; it reads MSFRLFTRTSQRLPRLNWVSPIRRY. The chain crosses the membrane as a helical span at residues 83-105; it reads AVGQGILILVVVGGLGTAYLRWP. 4 RCC1 repeats span residues 332-389, 390-452, 459-510, and 512-569; these read KGQF…AIDK, TGEI…VTIR, DHHY…TETE, and ENEV…KEQR.

It is found in the mitochondrion membrane. In Saccharomyces cerevisiae (strain ATCC 204508 / S288c) (Baker's yeast), this protein is Protein FMP25, mitochondrial (FMP25).